The sequence spans 146 residues: Superoxide dismutase [Mn] 2 (146 aa).

Mn(2+) is bound by residues histidine 42, aspartate 126, and histidine 130.

Belongs to the iron/manganese superoxide dismutase family. It depends on Mn(2+) as a cofactor.

The catalysed reaction is 2 superoxide + 2 H(+) = H2O2 + O2. Its function is as follows. Destroys superoxide anion radicals which are normally produced within the cells and which are toxic to biological systems. The chain is Superoxide dismutase [Mn] 2 (sod2) from Haloferax mediterranei (Halobacterium mediterranei).